Reading from the N-terminus, the 283-residue chain is Para-Rep C10 (283 aa).

Positions 3 to 96 (SIRAIHWCFT…IDGPWEYGTW (94 aa)) constitute a CRESS-DNA virus Rep endonuclease domain. Positions 10 to 13 (CFTL) match the RCR-1 motif. A divalent metal cation-binding residues include Glu-36 and His-42. The short motif at 42–44 (HLQ) is the RCR-2 element. A Nuclear localization signal motif is present at residues 51-71 (KQTTLKKMKELLPGAHLEMAR). Catalysis depends on Tyr-79, which acts as the For DNA cleavage activity. Positions 79–82 (YCQK) match the RCR-3 motif. Residue Glu-84 coordinates a divalent metal cation. Positions 96–102 (WISTGSH) match the Nuclear localization signal motif. Position 172–180 (172–180 (GPHGGEGKS)) interacts with ATP.

The protein belongs to the nanoviridea/circoviridae replication-associated protein family. Homooligomer (Potential). Rep binds to repeated DNA motifs (iterons). The cofactor is Mg(2+). Mn(2+) is required as a cofactor.

It is found in the host nucleus. The enzyme catalyses ATP + H2O = ADP + phosphate + H(+). Functionally, initiates and terminates the replication only of its own subviral DNA molecule. The closed circular ssDNA genome is first converted to a superhelical dsDNA. Rep binds a specific hairpin at the genome origin of replication. Introduces an endonucleolytic nick within the intergenic region of the genome, thereby initiating the rolling circle replication (RCR). Following cleavage, binds covalently to the 5'-phosphate of DNA as a tyrosyl ester. The cleavage gives rise to a free 3'-OH that serves as a primer for the cellular DNA polymerase. The polymerase synthesizes the (+) strand DNA by rolling circle mechanism. After one round of replication, a Rep-catalyzed nucleotidyl transfer reaction releases a circular single-stranded virus genome, thereby terminating the replication. Displays origin-specific DNA cleavage, nucleotidyl transferase, ATPase and helicase activities. This chain is Para-Rep C10 (C10), found in Milk vetch dwarf C10 alphasatellite (MVDC10A).